Consider the following 181-residue polypeptide: Translation initiation factor IF-3 (181 aa).

The protein belongs to the IF-3 family. As to quaternary structure, monomer.

The protein localises to the cytoplasm. Its function is as follows. IF-3 binds to the 30S ribosomal subunit and shifts the equilibrium between 70S ribosomes and their 50S and 30S subunits in favor of the free subunits, thus enhancing the availability of 30S subunits on which protein synthesis initiation begins. The sequence is that of Translation initiation factor IF-3 from Azotobacter vinelandii.